The sequence spans 184 residues: Large ribosomal subunit protein uL15 (184 aa).

The interval 1 to 55 (MDLSSLSPAKGSVKNKKRVGRGQGSGNGTTAGKGNKGQQSRSGYKRPVSEGGQMP) is disordered. A compositionally biased stretch (gly residues) spans 21 to 35 (RGQGSGNGTTAGKGN).

It belongs to the universal ribosomal protein uL15 family. As to quaternary structure, part of the 50S ribosomal subunit.

Functionally, binds to the 23S rRNA. This is Large ribosomal subunit protein uL15 from Prosthecochloris aestuarii (strain DSM 271 / SK 413).